The primary structure comprises 698 residues: Protein let-99 (698 aa).

In terms of domain architecture, DEP spans 23-107 (FRSNLSLKTN…SESRIYLFMK (85 aa)). 2 disordered regions span residues 115-188 (PKPR…DDEI) and 653-672 (ITRS…QASP). The segment covering 146–157 (RPPKARLPRRLS) has biased composition (basic residues). A compositionally biased stretch (basic and acidic residues) spans 178–188 (HGFDDHKDDEI).

It is found in the cytoplasm. Its subcellular location is the cell cortex. Functionally, required for the proper orientation of spindles after the establishment of polarity. May play a role in interactions between the astral microtubules and the cortical cytoskeleton. Required for asymmetric forces on nuclei and spindles. Acts downstream of the PAR signaling as an intermediate that transduces polarity information to the machinery that positions the mitotic spindle, possibly by regulating force generation. Regulates gpr-1/2 asymmetric cortical localization during the first embryonic cell divisions. Acts antagonistically to the gpr-1/2 signaling pathway. Regulates mes-1 expression and/or localization pattern during early embryogenesis. This Caenorhabditis elegans protein is Protein let-99 (let-99).